The sequence spans 142 residues: Hemoglobin subunit alpha-2 (142 aa).

Serine 1 is modified (N-acetylserine). In terms of domain architecture, Globin spans serine 1–arginine 142. Residue histidine 59 coordinates O2. Heme b is bound at residue histidine 88.

It belongs to the globin family. In terms of assembly, hb2 is a heterotetramer of two alpha-2 chains and two beta chains. As to expression, red blood cells.

In terms of biological role, involved in oxygen transport from gills to the various peripheral tissues. This Trematomus newnesi (Dusky notothen) protein is Hemoglobin subunit alpha-2 (hba2).